The sequence spans 53 residues: Tsetse thrombin inhibitor (53 aa).

The N-terminal stretch at 1 to 21 (MKFFTVLFFLLSIIYLIVAAP) is a signal peptide.

As to expression, expressed at high levels in salivary glands and midguts of adult tsetse flies.

Its subcellular location is the secreted. In terms of biological role, potent and specific inhibitor of human thrombin. It is also a potent inhibitor of thrombin-induced platelet aggregation. It is capable of antagonizing host hemostasis and facilitating blood feeding. In Glossina morsitans morsitans (Savannah tsetse fly), this protein is Tsetse thrombin inhibitor (TTI).